Reading from the N-terminus, the 60-residue chain is Homeobox protein engrailed-like B (60 aa).

The segment at residues 1-41 is a DNA-binding region (homeobox); it reads VEQLQRLKSEFGASRYLTEARRQALAQELRLNEAQIKIWFQ.

This sequence belongs to the engrailed homeobox family.

It is found in the nucleus. The polypeptide is Homeobox protein engrailed-like B (Myxine glutinosa (Atlantic hagfish)).